The following is a 355-amino-acid chain: UDP-N-acetylglucosamine--N-acetylmuramyl-(pentapeptide) pyrophosphoryl-undecaprenol N-acetylglucosamine transferase (355 aa).

Residues 15 to 17 (TGG), Asn-127, Arg-163, Ser-191, Ile-244, 263 to 268 (ALTVSE), and Gln-288 each bind UDP-N-acetyl-alpha-D-glucosamine.

This sequence belongs to the glycosyltransferase 28 family. MurG subfamily.

Its subcellular location is the cell inner membrane. The enzyme catalyses di-trans,octa-cis-undecaprenyl diphospho-N-acetyl-alpha-D-muramoyl-L-alanyl-D-glutamyl-meso-2,6-diaminopimeloyl-D-alanyl-D-alanine + UDP-N-acetyl-alpha-D-glucosamine = di-trans,octa-cis-undecaprenyl diphospho-[N-acetyl-alpha-D-glucosaminyl-(1-&gt;4)]-N-acetyl-alpha-D-muramoyl-L-alanyl-D-glutamyl-meso-2,6-diaminopimeloyl-D-alanyl-D-alanine + UDP + H(+). The protein operates within cell wall biogenesis; peptidoglycan biosynthesis. Functionally, cell wall formation. Catalyzes the transfer of a GlcNAc subunit on undecaprenyl-pyrophosphoryl-MurNAc-pentapeptide (lipid intermediate I) to form undecaprenyl-pyrophosphoryl-MurNAc-(pentapeptide)GlcNAc (lipid intermediate II). In Shigella boydii serotype 18 (strain CDC 3083-94 / BS512), this protein is UDP-N-acetylglucosamine--N-acetylmuramyl-(pentapeptide) pyrophosphoryl-undecaprenol N-acetylglucosamine transferase.